The sequence spans 308 residues: Eukaryotic translation initiation factor 3 subunit G-A (308 aa).

2 disordered regions span residues 1–35 (MPTGDYDSKPSWADQVEEEGIDAEPLSPQIRKPDP) and 177–226 (TGDK…ADDN). Low complexity predominate over residues 185-194 (GAEPEPAQAP). Positions 209–226 (GGSRRGESMQPNRRADDN) are enriched in basic and acidic residues. Residues 227–305 (ATIRVTNLSE…LILNVEWAKP (79 aa)) enclose the RRM domain.

This sequence belongs to the eIF-3 subunit G family. In terms of assembly, component of the eukaryotic translation initiation factor 3 (eIF-3) complex, which is composed of 13 subunits: eif3a, eif3b, eif3c, eif3d, eif3e, eif3f, eif3g, eif3h, eif3i, eif3j, eif3k, eif3l and eif3m.

It is found in the cytoplasm. Functionally, RNA-binding component of the eukaryotic translation initiation factor 3 (eIF-3) complex, which is involved in protein synthesis of a specialized repertoire of mRNAs and, together with other initiation factors, stimulates binding of mRNA and methionyl-tRNAi to the 40S ribosome. The eIF-3 complex specifically targets and initiates translation of a subset of mRNAs involved in cell proliferation. This subunit can bind 18S rRNA. In Xenopus laevis (African clawed frog), this protein is Eukaryotic translation initiation factor 3 subunit G-A (eif3g-a).